The primary structure comprises 644 residues: Far upstream element-binding protein 1 (644 aa).

Disordered regions lie at residues 1–31 (MADY…NDAF) and 44–94 (KIGG…PMHQ). An N-acetylalanine modification is found at alanine 2. The span at 14–27 (SAGGGGGGGGGGGV) shows a compositional bias: gly residues. Serine 52 and serine 55 each carry phosphoserine. Over residues 65–77 (RPLEDGDQPDAKK) the composition is skewed to basic and acidic residues. Over residues 81–94 (QNDSFGTQLPPMHQ) the composition is skewed to polar residues. 3 KH domains span residues 100-164 (VMTE…KRLL), 185-251 (NAVQ…KEMV), and 275-339 (NEGI…AEII). Serine 140 carries the phosphoserine modification. The residue at position 153 (threonine 153) is a Phosphothreonine. 4 positions are modified to omega-N-methylarginine: arginine 321, arginine 359, arginine 361, and arginine 363. The disordered stretch occupies residues 346–365 (VQAGNPGGPGPGGRGRGRGQ). Positions 350–365 (NPGGPGPGGRGRGRGQ) are enriched in gly residues. A KH 4 domain is found at 376 to 443 (LQEFNFIVPT…QQIDYARQLI (68 aa)). At threonine 432 the chain carries Phosphothreonine. Disordered regions lie at residues 447–532 (IGGP…GTDP) and 548–580 (QAQP…AGQV). Residues 468 to 505 (PHGPPGPPGPGTPMGPYNPAPYNPGPPGPAPHGPPAPY) show a composition bias toward pro residues. The span at 556–573 (PAGAPTTTQTNGQGDQQN) shows a compositional bias: low complexity. Serine 630 bears the Phosphoserine mark.

As to quaternary structure, found in a complex with PUF60 and far upstream element (FUSE) DNA segment. Interacts with PUF60 and JTV1. Ubiquitinated. This targets the protein for proteasome-mediated degradation.

It is found in the nucleus. Its function is as follows. Regulates MYC expression by binding to a single-stranded far-upstream element (FUSE) upstream of the MYC promoter. May act both as activator and repressor of transcription. This chain is Far upstream element-binding protein 1 (FUBP1), found in Homo sapiens (Human).